Consider the following 633-residue polypeptide: MPEIRLRHVVSCSSQDSTHCAENLLKADTYRKWRAAKAGEKTISVVLQLEKEEQIHSVDIGNDGSAFVEVLVGSSAGGAGEQDYEVLLVTSSFMSPSESRSGSNPNRVRMFGPDKLVRAAAEKRWDRVKIVCSQPYSKDSPFGLSFVRFHSPPDKDEAEAPSQKVTVTKLGQFRVKEEDESANSLRPGALFFSRINKTSPVTASDPAGPSYAAATLQASSAASSASPVSRAIGSTSKPQESPKGKRKLDLNQEEKKTPSKPPAQLSPSVPKRPKLPAPTRTPATAPVPARAQGAVTGKPRGEGTEPRRPRAGPEELGKILQGVVVVLSGFQNPFRSELRDKALELGAKYRPDWTRDSTHLICAFANTPKYSQVLGLGGRIVRKEWVLDCHRMRRRLPSQRYLMAGPGSSSEEDEASHSGGSGDEAPKLPQKQPQTKTKPTQAAGPSSPQKPPTPEETKAASPVLQEDIDIEGVQSEGQDNGAEDSGDTEDELRRVAEQKEHRLPPGQEENGEDPYAGSTDENTDSEEHQEPPDLPVPELPDFFQGKHFFLYGEFPGDERRKLIRYVTAFNGELEDYMSDRVQFVITAQEWDPSFEEALMDNPSLAFVRPRWIYSCNEKQKLLPHQLYGVVPQA.

Ser140 is subject to Phosphoserine. Lys176 participates in a covalent cross-link: Glycyl lysine isopeptide (Lys-Gly) (interchain with G-Cter in SUMO1); alternate. Lys176 participates in a covalent cross-link: Glycyl lysine isopeptide (Lys-Gly) (interchain with G-Cter in SUMO2); alternate. The residue at position 198 (Thr198) is a Phosphothreonine. Ser199 carries the phosphoserine modification. The residue at position 202 (Thr202) is a Phosphothreonine. Phosphoserine is present on residues Ser204, Ser226, and Ser241. Low complexity predominate over residues 221-231; that stretch reads AASSASPVSRA. The interval 221–313 is disordered; that stretch reads AASSASPVSR…TEPRRPRAGP (93 aa). Over residues 240-257 the composition is skewed to basic and acidic residues; sequence ESPKGKRKLDLNQEEKKT. The residue at position 257 (Thr257) is a Phosphothreonine. Phosphoserine is present on residues Ser259 and Ser266. Positions 277–291 are enriched in low complexity; sequence APTRTPATAPVPARA. At Thr281 the chain carries Phosphothreonine. Residues 299 to 313 show a composition bias toward basic and acidic residues; it reads PRGEGTEPRRPRAGP. In terms of domain architecture, BRCT 1 spans 315–403; the sequence is ELGKILQGVV…RRLPSQRYLM (89 aa). Residue Ser371 is modified to Phosphoserine; by PRKDC. 3 disordered regions span residues 400–462, 471–490, and 498–536; these read RYLM…AASP, EGVQ…DTED, and QKEH…DLPV. Phosphoserine is present on residues Ser408, Ser409, Ser410, and Ser421. The segment covering 427–443 has biased composition (low complexity); the sequence is KLPQKQPQTKTKPTQAA. Residues Ser446 and Ser447 each carry the phosphoserine modification. Residues Thr453 and Thr457 each carry the phosphothreonine modification. Phosphoserine is present on residues Ser461 and Ser485. Over residues 481 to 490 the composition is skewed to acidic residues; it reads GAEDSGDTED. Thr488 bears the Phosphothreonine mark. Ser518 carries the phosphoserine modification. Residues Thr519 and Thr523 each carry the phosphothreonine modification. Residues 538-629 enclose the BRCT 2 domain; it reads ELPDFFQGKH…KLLPHQLYGV (92 aa).

As to quaternary structure, homodimer. Interacts with polynucleotide kinase (PNK), DNA polymerase-beta (POLB) and DNA ligase III (LIG3). Interacts with APTX and APLF. Interacts with APEX1; the interaction is induced by SIRT1 and increases with the acetylated form of APEX1. Interacts with (poly-ADP-ribosylated) PARP1. Phosphorylation of Ser-371 causes dimer dissociation. Phosphorylation by CK2 promotes interaction with APTX and APLF. Post-translationally, sumoylated. In terms of tissue distribution, expressed in fibroblasts, retinal pigmented epithelial cells and lymphoblastoid cells (at protein level).

The protein resides in the nucleus. It is found in the chromosome. In terms of biological role, scaffold protein involved in DNA single-strand break repair by mediating the assembly of DNA break repair protein complexes. Negatively regulates ADP-ribosyltransferase activity of PARP1 during base-excision repair in order to prevent excessive PARP1 activity. Recognizes and binds poly-ADP-ribose chains: specifically binds auto-poly-ADP-ribosylated PARP1, limiting its activity. The sequence is that of DNA repair protein XRCC1 from Homo sapiens (Human).